A 700-amino-acid chain; its full sequence is uncharacterized protein (700 aa).

C307, C310, C314, and C558 together coordinate [4Fe-4S] cluster.

It belongs to the AOR/FOR family. [4Fe-4S] cluster serves as cofactor. The cofactor is Mo-molybdopterin. Tungstopterin is required as a cofactor.

This is an uncharacterized protein from Escherichia coli (strain K12).